Reading from the N-terminus, the 164-residue chain is Arginine repressor (164 aa).

It belongs to the ArgR family.

The protein resides in the cytoplasm. The protein operates within amino-acid biosynthesis; L-arginine biosynthesis [regulation]. Functionally, regulates arginine biosynthesis genes. This chain is Arginine repressor, found in Mycolicibacterium paratuberculosis (strain ATCC BAA-968 / K-10) (Mycobacterium paratuberculosis).